The chain runs to 308 residues: MVLGRGLLGRRSLAALGAACARRGLGPALLGVLHHTDLRKNLTVDEGTMKVEVLPALTDNYMYLVIDDETKEAAIVDPVQPQKVLDAARKHGVKLTTVLTTHHHWDHAGGNEKLVKLQSGLKVYGGDDRIGALTHKITHLSTLQVGSLNVKCLATPCHTSGHICYFVSRPGGSEPPAVFTGDTLFVAGCGKFYEGTADEMCKALLEVLGRLPPDTRVYCGHEYTINNLKFARHVEPGNAAIQEKLAWAKEKYSIGEPTVPSTLAEEFTYNPFMRVREKTVQQHARETDPVTTMRAVRKEKDEFKMPRD.

The N-terminal 13 residues, 1-13 (MVLGRGLLGRRSL), are a transit peptide targeting the mitochondrion. Zn(2+)-binding residues include histidine 102, histidine 104, aspartate 106, and histidine 107. The residue at position 116 (lysine 116) is an N6-acetyllysine. Residues histidine 158 and aspartate 182 each contribute to the Zn(2+) site. Substrate contacts are provided by residues 191 to 193 (KFY) and 221 to 223 (HEY). Histidine 221 serves as a coordination point for Zn(2+). Residue lysine 229 is modified to N6-acetyllysine; alternate. Residue lysine 229 is modified to N6-succinyllysine; alternate. 297 to 300 (RKEK) contributes to the substrate binding site.

This sequence belongs to the metallo-beta-lactamase superfamily. Glyoxalase II family. As to quaternary structure, monomer. Requires Zn(2+) as cofactor. As to expression, testis.

It localises to the mitochondrion matrix. The protein resides in the cytoplasm. The enzyme catalyses an S-(2-hydroxyacyl)glutathione + H2O = a 2-hydroxy carboxylate + glutathione + H(+). It carries out the reaction (R)-S-lactoylglutathione + H2O = (R)-lactate + glutathione + H(+). It functions in the pathway secondary metabolite metabolism; methylglyoxal degradation; (R)-lactate from methylglyoxal: step 2/2. Thiolesterase that catalyzes the hydrolysis of S-D-lactoyl-glutathione to form glutathione and D-lactic acid. The protein is Hydroxyacylglutathione hydrolase, mitochondrial (HAGH) of Macaca fascicularis (Crab-eating macaque).